The primary structure comprises 500 residues: Cytochrome P450 monooxygenase 103 (500 aa).

The next 2 membrane-spanning stretches (helical) occupy residues 1-21 (MAST…YLLR) and 26-46 (PLYA…IGAL). A glycan (N-linked (GlcNAc...) asparagine) is linked at asparagine 374. Position 441 (cysteine 441) interacts with heme.

Belongs to the cytochrome P450 family. Heme serves as cofactor.

It localises to the membrane. It participates in secondary metabolite biosynthesis. Its function is as follows. Cytochrome P450 monooxygenase that is able to use testosterone as a substrate for oxidation. In Postia placenta (strain ATCC 44394 / Madison 698-R) (Brown rot fungus), this protein is Cytochrome P450 monooxygenase 103.